Consider the following 328-residue polypeptide: DNA-directed RNA polymerase subunit alpha (328 aa).

An alpha N-terminal domain (alpha-NTD) region spans residues 1-234; sequence MQTAVNEFLT…QQLAVFVDLE (234 aa). The tract at residues 248 to 328 is alpha C-terminal domain (alpha-CTD); that stretch reads IDPILLRPVD…NWPPASLKND (81 aa).

This sequence belongs to the RNA polymerase alpha chain family. As to quaternary structure, homodimer. The RNAP catalytic core consists of 2 alpha, 1 beta, 1 beta' and 1 omega subunit. When a sigma factor is associated with the core the holoenzyme is formed, which can initiate transcription.

It catalyses the reaction RNA(n) + a ribonucleoside 5'-triphosphate = RNA(n+1) + diphosphate. In terms of biological role, DNA-dependent RNA polymerase catalyzes the transcription of DNA into RNA using the four ribonucleoside triphosphates as substrates. This is DNA-directed RNA polymerase subunit alpha from Cellvibrio japonicus (strain Ueda107) (Pseudomonas fluorescens subsp. cellulosa).